The sequence spans 222 residues: Fibrillarin-like rRNA/tRNA 2'-O-methyltransferase (222 aa).

S-adenosyl-L-methionine contacts are provided by residues 86-87 (TT), 104-105 (EV), 129-130 (DA), and 149-152 (DISQ).

The protein belongs to the methyltransferase superfamily. Fibrillarin family. In terms of assembly, interacts with nop5. Component of box C/D small ribonucleoprotein (sRNP) particles that contain rpl7ae, FlpA and nop5, plus a guide RNA.

Involved in pre-rRNA and tRNA processing. Utilizes the methyl donor S-adenosyl-L-methionine to catalyze the site-specific 2'-hydroxyl methylation of ribose moieties in rRNA and tRNA. Site specificity is provided by a guide RNA that base pairs with the substrate. Methylation occurs at a characteristic distance from the sequence involved in base pairing with the guide RNA. The sequence is that of Fibrillarin-like rRNA/tRNA 2'-O-methyltransferase from Thermoplasma volcanium (strain ATCC 51530 / DSM 4299 / JCM 9571 / NBRC 15438 / GSS1).